The sequence spans 83 residues: Cytochrome b559 subunit alpha (83 aa).

Residues 21–35 (VIHSITIPSLFIAGW) form a helical membrane-spanning segment. Position 23 (His23) interacts with heme.

The protein belongs to the PsbE/PsbF family. As to quaternary structure, heterodimer of an alpha subunit and a beta subunit. PSII is composed of 1 copy each of membrane proteins PsbA, PsbB, PsbC, PsbD, PsbE, PsbF, PsbH, PsbI, PsbJ, PsbK, PsbL, PsbM, PsbT, PsbX, PsbY, PsbZ, Psb30/Ycf12, at least 3 peripheral proteins of the oxygen-evolving complex and a large number of cofactors. It forms dimeric complexes. It depends on heme b as a cofactor.

It is found in the plastid. The protein localises to the chloroplast thylakoid membrane. This b-type cytochrome is tightly associated with the reaction center of photosystem II (PSII). PSII is a light-driven water:plastoquinone oxidoreductase that uses light energy to abstract electrons from H(2)O, generating O(2) and a proton gradient subsequently used for ATP formation. It consists of a core antenna complex that captures photons, and an electron transfer chain that converts photonic excitation into a charge separation. The sequence is that of Cytochrome b559 subunit alpha from Chlorella vulgaris (Green alga).